A 162-amino-acid polypeptide reads, in one-letter code: MSAKINAKKLEMFDLLKQFIDSKQNLFFLDYRGLNVAQLTELRNKIEGEHGSLKVVKNNIMKMVLKEKNINVVDSCLVGPTVVVTALEEANVIAKIFYDFVKSSTLKVKGGFVLGEFYDEAKVQAYSKLPTKKESISLFASVLKAPVSKLARTLKALADVKN.

It belongs to the universal ribosomal protein uL10 family. In terms of assembly, part of the ribosomal stalk of the 50S ribosomal subunit. The N-terminus interacts with L11 and the large rRNA to form the base of the stalk. The C-terminus forms an elongated spine to which L12 dimers bind in a sequential fashion forming a multimeric L10(L12)X complex.

In terms of biological role, forms part of the ribosomal stalk, playing a central role in the interaction of the ribosome with GTP-bound translation factors. This is Large ribosomal subunit protein uL10 (rplJ) from Borreliella burgdorferi (strain ATCC 35210 / DSM 4680 / CIP 102532 / B31) (Borrelia burgdorferi).